We begin with the raw amino-acid sequence, 633 residues long: Histone-lysine N-methyltransferase Su(var)3-9 (633 aa).

Residues 213 to 271 (YIVEKIESVEVVQFQPVFFVKWLGYDVSANTWESYVNLSDCAEMEKFVERHLQLHQHYI) enclose the Chromo domain. Residues 407–472 (VGCMCRHQSG…SCTNRVVQNG (66 aa)) form the Pre-SET domain. Residues Cys409, Cys411, Cys419, Cys425, Cys426, Cys454, Cys458, Cys460, and Cys464 each contribute to the Zn(2+) site. Positions 475–601 (HPLVLFKTSN…AGEELSFDYI (127 aa)) constitute an SET domain. Residues 486–488 (SGW), Tyr529, and 558–559 (NH) contribute to the S-adenosyl-L-methionine site. The Zn(2+) site is built by Cys561, Cys621, Cys623, and Cys628. The Post-SET domain maps to 617–633 (ARVQCRCGAANCRKVLF).

The protein belongs to the class V-like SAM-binding methyltransferase superfamily. Histone-lysine methyltransferase family. Suvar3-9 subfamily. In terms of assembly, interacts with Su(var)205 and Su(var)3-7. Probably associates with HDAC1/Rpd3.

The protein localises to the nucleus. It localises to the chromosome. Its subcellular location is the centromere. The enzyme catalyses L-lysyl(9)-[histone H3] + 3 S-adenosyl-L-methionine = N(6),N(6),N(6)-trimethyl-L-lysyl(9)-[histone H3] + 3 S-adenosyl-L-homocysteine + 3 H(+). Functionally, histone methyltransferase that specifically trimethylates 'Lys-9' of histone H3 using monomethylated H3 'Lys-9' as substrate. H3 'Lys-9' trimethylation represents a specific tag for epigenetic transcriptional repression by recruiting Su(var)205/HP1 to methylated histones. Mainly functions in heterochromatin regions, thereby playing a central role in the establishment of constitutive heterochromatin at pericentric regions. Involved in heterochromatic gene silencing including the modification of position-effect-variegation. The chain is Histone-lysine N-methyltransferase Su(var)3-9 (Su(var)3-9) from Drosophila pseudoobscura pseudoobscura (Fruit fly).